A 306-amino-acid polypeptide reads, in one-letter code: 4-hydroxy-tetrahydrodipicolinate synthase (306 aa).

Residue threonine 46 participates in pyruvate binding. The Proton donor/acceptor role is filled by tyrosine 134. Catalysis depends on lysine 162, which acts as the Schiff-base intermediate with substrate. Pyruvate is bound at residue valine 204.

It belongs to the DapA family. Homotetramer; dimer of dimers.

Its subcellular location is the cytoplasm. The enzyme catalyses L-aspartate 4-semialdehyde + pyruvate = (2S,4S)-4-hydroxy-2,3,4,5-tetrahydrodipicolinate + H2O + H(+). The protein operates within amino-acid biosynthesis; L-lysine biosynthesis via DAP pathway; (S)-tetrahydrodipicolinate from L-aspartate: step 3/4. In terms of biological role, catalyzes the condensation of (S)-aspartate-beta-semialdehyde [(S)-ASA] and pyruvate to 4-hydroxy-tetrahydrodipicolinate (HTPA). This is 4-hydroxy-tetrahydrodipicolinate synthase from Synechococcus sp. (strain JA-2-3B'a(2-13)) (Cyanobacteria bacterium Yellowstone B-Prime).